The chain runs to 663 residues: DNA ligase (663 aa).

Residues 33 to 37, 82 to 83, and glutamate 113 contribute to the NAD(+) site; these read DQEFD and SL. Lysine 115 acts as the N6-AMP-lysine intermediate in catalysis. NAD(+) is bound by residues arginine 136, glutamate 170, lysine 286, and lysine 310. Cysteine 404, cysteine 407, cysteine 422, and cysteine 427 together coordinate Zn(2+). The BRCT domain maps to 587 to 663; it reads SSDPSLTGKL…IEESDLEDFL (77 aa).

The protein belongs to the NAD-dependent DNA ligase family. LigA subfamily. It depends on Mg(2+) as a cofactor. Mn(2+) serves as cofactor.

The enzyme catalyses NAD(+) + (deoxyribonucleotide)n-3'-hydroxyl + 5'-phospho-(deoxyribonucleotide)m = (deoxyribonucleotide)n+m + AMP + beta-nicotinamide D-nucleotide.. Its function is as follows. DNA ligase that catalyzes the formation of phosphodiester linkages between 5'-phosphoryl and 3'-hydroxyl groups in double-stranded DNA using NAD as a coenzyme and as the energy source for the reaction. It is essential for DNA replication and repair of damaged DNA. In Natranaerobius thermophilus (strain ATCC BAA-1301 / DSM 18059 / JW/NM-WN-LF), this protein is DNA ligase.